The sequence spans 521 residues: GMP synthase [glutamine-hydrolyzing] (521 aa).

Residues 9-203 (KILILDFGSQ…VSDICQCKKN (195 aa)) enclose the Glutamine amidotransferase type-1 domain. The active-site Nucleophile is Cys-86. Active-site residues include His-177 and Glu-179. A GMPS ATP-PPase domain is found at 204–396 (WTTDNIITKL…LGLPTHMLNC (193 aa)). ATP is bound at residue 231–237 (SGGVDSS).

In terms of assembly, homodimer.

It catalyses the reaction XMP + L-glutamine + ATP + H2O = GMP + L-glutamate + AMP + diphosphate + 2 H(+). It participates in purine metabolism; GMP biosynthesis; GMP from XMP (L-Gln route): step 1/1. Its function is as follows. Catalyzes the synthesis of GMP from XMP. The chain is GMP synthase [glutamine-hydrolyzing] from Vesicomyosocius okutanii subsp. Calyptogena okutanii (strain HA).